The following is a 237-amino-acid chain: MRPSKRAPDELRKVTLEKGVARYAEGSCLVTFGETKVLCTASLEERGPPWLRGSGKGWVTAEYAMLPRATHERNRREVTAGKPSGRTQEIQRLIGRSLRAVVNLPAIGERQIVVDCDVLQADGGTRTASITGAWVALHECFTWMRGRSIISVDPMRDHVAAISCGIHKGIPILDLDYDEDSAADTDANFVITGSGGIVEVQGTAEIAPFSEEQFLGLLRLAKAGVAQLVALQKQAVG.

Residues arginine 86 and 124–126 (GTR) each bind phosphate.

This sequence belongs to the RNase PH family. In terms of assembly, homohexameric ring arranged as a trimer of dimers.

It carries out the reaction tRNA(n+1) + phosphate = tRNA(n) + a ribonucleoside 5'-diphosphate. Functionally, phosphorolytic 3'-5' exoribonuclease that plays an important role in tRNA 3'-end maturation. Removes nucleotide residues following the 3'-CCA terminus of tRNAs; can also add nucleotides to the ends of RNA molecules by using nucleoside diphosphates as substrates, but this may not be physiologically important. Probably plays a role in initiation of 16S rRNA degradation (leading to ribosome degradation) during starvation. This chain is Ribonuclease PH, found in Methylobacterium sp. (strain 4-46).